We begin with the raw amino-acid sequence, 186 residues long: Ribosome-recycling factor (186 aa).

The protein belongs to the RRF family.

It is found in the cytoplasm. Responsible for the release of ribosomes from messenger RNA at the termination of protein biosynthesis. May increase the efficiency of translation by recycling ribosomes from one round of translation to another. The sequence is that of Ribosome-recycling factor from Bordetella avium (strain 197N).